We begin with the raw amino-acid sequence, 156 residues long: MVAVGSTLPKVTLWENKPEEVVEFPSQGKFIIVGVPGAFTPPCSSQVPGYIANEKQFAAKGISGIYVVAVNDVFVTKAWKKSFDGGEQSGVHFVADWNGEFTKAFDAGFDASGLLGPLRSKRYAAVVENGKVVKVFIENEVTDVDISSADKVLSSL.

Residues 2–156 (VAVGSTLPKV…SSADKVLSSL (155 aa)) enclose the Thioredoxin domain. The active-site Cysteine sulfenic acid (-SOH) intermediate is the Cys43.

This sequence belongs to the peroxiredoxin family. Prx5 subfamily. In terms of assembly, homodimer; disulfide-linked, upon oxidation.

The protein localises to the cytoplasm. Its subcellular location is the nucleus. In terms of biological role, may act as a chaperone rather than a peroxidase. Has no thioredoxin-dependent peroxidase activity. Shows weak chaperone activity. This is Peroxisomal membrane associated protein 20 from Schizosaccharomyces pombe (strain 972 / ATCC 24843) (Fission yeast).